The following is a 181-amino-acid chain: CASP-like protein 5A1 (181 aa).

Residues 1-38 lie on the Cytoplasmic side of the membrane; sequence MFASRPVVHPLEVAAPAHPVQQPAPGVLMKDLPGMPGT. A helical membrane pass occupies residues 39–59; the sequence is PGGLGLRVLQLLFAAISLAVM. Topologically, residues 60–77 are extracellular; the sequence is SSTADFASVSAFCYLITT. The chain crosses the membrane as a helical span at residues 78 to 98; sequence TVLQCVWSLTVAIVDIYALLV. Residues 99–115 are Cytoplasmic-facing; it reads KRCLQNRRAVTLFSIGD. The helical transmembrane segment at 116-136 threads the bilayer; sequence GITWLVSFSGACAAAGIPVLI. Residues 137–153 are Extracellular-facing; that stretch reads DADLIMCSENPCASFQT. A helical transmembrane segment spans residues 154 to 174; that stretch reads AVAMGFMCCFSLLPSFLLNFY. Residues 175-181 lie on the Cytoplasmic side of the membrane; that stretch reads SIASSHG.

It belongs to the Casparian strip membrane proteins (CASP) family. Homodimer and heterodimers.

It is found in the cell membrane. This is CASP-like protein 5A1 from Zea mays (Maize).